Here is a 1073-residue protein sequence, read N- to C-terminus: ATP-dependent helicase/deoxyribonuclease subunit B (1073 aa).

It belongs to the helicase family. AddB/RexB type 2 subfamily. In terms of assembly, heterodimer of AddA and RexB. It depends on Mg(2+) as a cofactor.

The heterodimer acts as both an ATP-dependent DNA helicase and an ATP-dependent, dual-direction single-stranded exonuclease. Recognizes the chi site generating a DNA molecule suitable for the initiation of homologous recombination. This subunit has 5' -&gt; 3' nuclease activity but not helicase activity. This Streptococcus equi subsp. zooepidemicus (strain H70) protein is ATP-dependent helicase/deoxyribonuclease subunit B.